We begin with the raw amino-acid sequence, 69 residues long: Light-harvesting polypeptide B-800/860 alpha chain (69 aa).

Over 1–14 (MTNGKIWLVVKPTV) the chain is Cytoplasmic. Residues 15-35 (GLPIGMLFAALLAVLIHGLLF) traverse the membrane as a helical segment. His-31 is a binding site for a bacteriochlorophyll. The Periplasmic segment spans residues 36–69 (VDGRLKSWWSEFPVAKPAVVSVQAAPAPVAAEVK).

It belongs to the antenna complex alpha subunit family. The core complex is formed by different alpha and beta chains, binding bacteriochlorophyll molecules, and arranged most probably in tetrameric structures disposed around the reaction center. The non-pigmented gamma chains may constitute additional components.

The protein localises to the cell inner membrane. In terms of biological role, antenna complexes are light-harvesting systems, which transfer the excitation energy to the reaction centers. This chain is Light-harvesting polypeptide B-800/860 alpha chain, found in Rhodocyclus tenuis (Rhodospirillum tenue).